We begin with the raw amino-acid sequence, 156 residues long: Transcriptional repressor NrdR (156 aa).

The segment at 3–34 is a zinc-finger region; that stretch reads CPFCGSMDTRVLDSRPTLDGTAIRRRRECSSC. The ATP-cone domain maps to 49 to 139; the sequence is VLVVKKDGRR…VYRDFREVDQ (91 aa).

The protein belongs to the NrdR family. The cofactor is Zn(2+).

In terms of biological role, negatively regulates transcription of bacterial ribonucleotide reductase nrd genes and operons by binding to NrdR-boxes. The protein is Transcriptional repressor NrdR of Thermotoga maritima (strain ATCC 43589 / DSM 3109 / JCM 10099 / NBRC 100826 / MSB8).